Reading from the N-terminus, the 130-residue chain is Small ribosomal subunit protein uS9 (130 aa).

Belongs to the universal ribosomal protein uS9 family.

In Pseudomonas syringae pv. tomato (strain ATCC BAA-871 / DC3000), this protein is Small ribosomal subunit protein uS9.